The sequence spans 505 residues: Glutamate--tRNA ligase (505 aa).

The 'HIGH' region motif lies at 12–22; the sequence is PSPTGDPHVGT. The 'KMSKS' region motif lies at 253–257; that stretch reads KLSKR. Position 256 (K256) interacts with ATP.

The protein belongs to the class-I aminoacyl-tRNA synthetase family. Glutamate--tRNA ligase type 1 subfamily. Monomer.

It is found in the cytoplasm. It carries out the reaction tRNA(Glu) + L-glutamate + ATP = L-glutamyl-tRNA(Glu) + AMP + diphosphate. Catalyzes the attachment of glutamate to tRNA(Glu) in a two-step reaction: glutamate is first activated by ATP to form Glu-AMP and then transferred to the acceptor end of tRNA(Glu). This chain is Glutamate--tRNA ligase, found in Chlamydia caviae (strain ATCC VR-813 / DSM 19441 / 03DC25 / GPIC) (Chlamydophila caviae).